Consider the following 105-residue polypeptide: Antitoxin YfjZ (105 aa).

This sequence belongs to the CbeA/YafW/YfjZ antitoxin family.

Its function is as follows. Antitoxin component of a type IV toxin-antitoxin (TA) system. Antitoxin that counteracts the effect of cognate toxin YpjF. Also counteracts the effect of non-cognate toxins CbtA and YfkI. In Escherichia coli (strain K12), this protein is Antitoxin YfjZ (yfjZ).